The following is a 414-amino-acid chain: Protein HIM1 (414 aa).

In terms of biological role, may participate in the control of processing of mutational intermediates appearing during error-prone bypass of DNA damage. In Saccharomyces cerevisiae (strain ATCC 204508 / S288c) (Baker's yeast), this protein is Protein HIM1 (HIM1).